The primary structure comprises 168 residues: 2-C-methyl-D-erythritol 2,4-cyclodiphosphate synthase (168 aa).

A divalent metal cation contacts are provided by aspartate 15 and histidine 17. 4-CDP-2-C-methyl-D-erythritol 2-phosphate is bound by residues 15–17 (DVH) and 45–46 (HS). An a divalent metal cation-binding site is contributed by histidine 53. 4-CDP-2-C-methyl-D-erythritol 2-phosphate is bound by residues 72–76 (FPNSD), phenylalanine 150, and arginine 153.

Belongs to the IspF family. In terms of assembly, homotrimer. It depends on a divalent metal cation as a cofactor.

It catalyses the reaction 4-CDP-2-C-methyl-D-erythritol 2-phosphate = 2-C-methyl-D-erythritol 2,4-cyclic diphosphate + CMP. It participates in isoprenoid biosynthesis; isopentenyl diphosphate biosynthesis via DXP pathway; isopentenyl diphosphate from 1-deoxy-D-xylulose 5-phosphate: step 4/6. Functionally, involved in the biosynthesis of isopentenyl diphosphate (IPP) and dimethylallyl diphosphate (DMAPP), two major building blocks of isoprenoid compounds. Catalyzes the conversion of 4-diphosphocytidyl-2-C-methyl-D-erythritol 2-phosphate (CDP-ME2P) to 2-C-methyl-D-erythritol 2,4-cyclodiphosphate (ME-CPP) with a corresponding release of cytidine 5-monophosphate (CMP). The sequence is that of 2-C-methyl-D-erythritol 2,4-cyclodiphosphate synthase from Anaplasma phagocytophilum (strain HZ).